The sequence spans 412 residues: MAQDVCPTRSEPSLSFLQGLILGQLSVVLLIAAFIKFFIFGEAPSAEETASIRATERRSRTLAHKKSLLSLRSAATQRQGSQPPALPALNKKKSSILRSNPPTLTIGSILDKTYYKVDSHQPESLDWFNVLIAQTIAQFRSDAQHDDAILTSLSKTLNGTSRPDFVDEIRVSELSLGEDFPIFSNCRIIPVDEDGLQFGAGKAFDPKQAAREGARLQARMDVDLSDMITLAVETKLLLNFPKRLSAVLPVALAVSVVRFSGTLSISFNPSNPSENTPTKMTFTFLDDYRLDFSIRSLLGSRSRLQDVPKIAQLVESRLHRWFDERCVEPRFQEIELPSMWPRKKNTRGGDEIIANIEQSINKAHGGAIAKEARQELDTETDGLRYRRRPVGDDTYSVSGSMPGSLPGIDMPT.

Residues 1–19 (MAQDVCPTRSEPSLSFLQG) are Lumenal-facing. A helical transmembrane segment spans residues 20 to 40 (LILGQLSVVLLIAAFIKFFIF). Residues 41-412 (GEAPSAEETA…GSLPGIDMPT (372 aa)) lie on the Cytoplasmic side of the membrane. The region spanning 121–337 (QPESLDWFNV…EPRFQEIELP (217 aa)) is the SMP-LTD domain. Basic and acidic residues predominate over residues 372-384 (ARQELDTETDGLR). Residues 372–412 (ARQELDTETDGLRYRRRPVGDDTYSVSGSMPGSLPGIDMPT) form a disordered region.

Belongs to the MMM1 family. In terms of assembly, homodimer. Component of the ER-mitochondria encounter structure (ERMES) or MDM complex, composed of MMM1, MDM10, MDM12 and MDM34. An MMM1 homodimer associates with one molecule of MDM12 on each side in a pairwise head-to-tail manner, and the SMP-LTD domains of MMM1 and MDM12 generate a continuous hydrophobic tunnel for phospholipid trafficking.

The protein localises to the endoplasmic reticulum membrane. In terms of biological role, component of the ERMES/MDM complex, which serves as a molecular tether to connect the endoplasmic reticulum (ER) and mitochondria. Components of this complex are involved in the control of mitochondrial shape and protein biogenesis, and function in nonvesicular lipid trafficking between the ER and mitochondria. The MDM12-MMM1 subcomplex functions in the major beta-barrel assembly pathway that is responsible for biogenesis of all outer membrane beta-barrel proteins, and acts in a late step after the SAM complex. The MDM10-MDM12-MMM1 subcomplex further acts in the TOM40-specific pathway after the action of the MDM12-MMM1 complex. Essential for establishing and maintaining the structure of mitochondria and maintenance of mtDNA nucleoids. This chain is Maintenance of mitochondrial morphology protein 1, found in Podospora anserina (strain S / ATCC MYA-4624 / DSM 980 / FGSC 10383) (Pleurage anserina).